The sequence spans 144 residues: Pleckstrin homology-like domain family A member 2 (144 aa).

Residues 18-111 (ILCEGELEKR…AAITMALIDF (94 aa)) form the PH domain. Phosphoserine is present on Ser140.

It belongs to the PHLDA2 family. As to expression, specifically expressed at high levels in extraembryonic tissues in the developing conceptus (at protein level). Expressed in placenta and yolc sac. Expressed at low levels in fetal liver and kidney.

It is found in the cytoplasm. It localises to the membrane. In terms of biological role, plays a role in regulating placenta growth. May act via its PH domain that competes with other PH domain-containing proteins, thereby preventing their binding to membrane lipids. In Mus musculus (Mouse), this protein is Pleckstrin homology-like domain family A member 2 (Phlda2).